Here is a 358-residue protein sequence, read N- to C-terminus: Carbamoyl phosphate synthase small chain (358 aa).

The segment at 1–168 (MKRLLLLEDG…TKLAYASPGV (168 aa)) is CPSase. L-glutamine is bound by residues Ser45, Gly219, and Gly221. The 187-residue stretch at 171–357 (NIVLVDFGLK…INMIDDFQQK (187 aa)) folds into the Glutamine amidotransferase type-1 domain. Cys246 functions as the Nucleophile in the catalytic mechanism. 5 residues coordinate L-glutamine: Met247, Gln250, Asn288, Gly290, and Tyr291. Residues His330 and Asp332 contribute to the active site.

It belongs to the CarA family. In terms of assembly, composed of two chains; the small (or glutamine) chain promotes the hydrolysis of glutamine to ammonia, which is used by the large (or ammonia) chain to synthesize carbamoyl phosphate. Tetramer of heterodimers (alpha,beta)4.

It catalyses the reaction hydrogencarbonate + L-glutamine + 2 ATP + H2O = carbamoyl phosphate + L-glutamate + 2 ADP + phosphate + 2 H(+). It carries out the reaction L-glutamine + H2O = L-glutamate + NH4(+). The protein operates within amino-acid biosynthesis; L-arginine biosynthesis; carbamoyl phosphate from bicarbonate: step 1/1. It participates in pyrimidine metabolism; UMP biosynthesis via de novo pathway; (S)-dihydroorotate from bicarbonate: step 1/3. Its function is as follows. Small subunit of the glutamine-dependent carbamoyl phosphate synthetase (CPSase). CPSase catalyzes the formation of carbamoyl phosphate from the ammonia moiety of glutamine, carbonate, and phosphate donated by ATP, constituting the first step of 2 biosynthetic pathways, one leading to arginine and/or urea and the other to pyrimidine nucleotides. The small subunit (glutamine amidotransferase) binds and cleaves glutamine to supply the large subunit with the substrate ammonia. The chain is Carbamoyl phosphate synthase small chain from Streptococcus agalactiae serotype III (strain NEM316).